The following is a 376-amino-acid chain: Putative phosphoserine aminotransferase (376 aa).

Arginine 50 is an L-glutamate binding site. Pyridoxal 5'-phosphate is bound by residues 84–85 (AT), phenylalanine 108, threonine 154, aspartate 176, and glutamine 199. An N6-(pyridoxal phosphate)lysine modification is found at lysine 200. Residue 251–252 (NT) coordinates pyridoxal 5'-phosphate.

The protein belongs to the class-V pyridoxal-phosphate-dependent aminotransferase family. SerC subfamily. As to quaternary structure, homodimer. Pyridoxal 5'-phosphate serves as cofactor.

It is found in the cytoplasm. It carries out the reaction O-phospho-L-serine + 2-oxoglutarate = 3-phosphooxypyruvate + L-glutamate. The catalysed reaction is 4-(phosphooxy)-L-threonine + 2-oxoglutarate = (R)-3-hydroxy-2-oxo-4-phosphooxybutanoate + L-glutamate. It functions in the pathway amino-acid biosynthesis; L-serine biosynthesis; L-serine from 3-phospho-D-glycerate: step 2/3. Its pathway is cofactor biosynthesis; pyridoxine 5'-phosphate biosynthesis; pyridoxine 5'-phosphate from D-erythrose 4-phosphate: step 3/5. Catalyzes the reversible conversion of 3-phosphohydroxypyruvate to phosphoserine and of 3-hydroxy-2-oxo-4-phosphonooxybutanoate to phosphohydroxythreonine. The protein is Putative phosphoserine aminotransferase of Mycobacterium bovis (strain ATCC BAA-935 / AF2122/97).